The sequence spans 156 residues: Snaclec A5 (156 aa).

The N-terminal stretch at 1–23 (MGRSISVSFGLLVVFLSLSGTGA) is a signal peptide. 3 disulfide bridges follow: cysteine 27-cysteine 38, cysteine 55-cysteine 154, and cysteine 129-cysteine 146. Residues 34–155 (HEGHCYKVFN…CGKPYRFTCE (122 aa)) form the C-type lectin domain.

The protein belongs to the snaclec family. As to quaternary structure, heterodimer; disulfide-linked. In terms of tissue distribution, expressed by the venom gland.

The protein localises to the secreted. Its function is as follows. Interferes with one step of hemostasis (modulation of platelet aggregation, or coagulation cascade, for example). The polypeptide is Snaclec A5 (Macrovipera lebetinus (Levantine viper)).